The sequence spans 112 residues: UPF0060 membrane protein AAur_4166 (112 aa).

4 helical membrane-spanning segments follow: residues 8 to 28 (ILFV…WQAV), 33 to 53 (AWWW…FAAF), 62 to 82 (VLAA…MLMD), and 91 to 111 (VIGA…PRPG).

Belongs to the UPF0060 family.

It localises to the cell membrane. The protein is UPF0060 membrane protein AAur_4166 of Paenarthrobacter aurescens (strain TC1).